We begin with the raw amino-acid sequence, 157 residues long: MRIGHGYDVHRFCDGDFITLGGVRIPHKYGLLAHSDGDVLLHALSDALLGAAALGDIGKHFPDTDPQFKGADSRVLLRHVVGIVDNKGWKVGNVDATIVAQAPKMAPHIETMRQQIAADLQVELDQVNVKATTEEKLGFTGREEGIAVHAVALLLPA.

Positions 8 and 10 each coordinate a divalent metal cation. Residues 8 to 10 and 34 to 35 each bind 4-CDP-2-C-methyl-D-erythritol 2-phosphate; these read DVH and HS. His-42 serves as a coordination point for a divalent metal cation. 4-CDP-2-C-methyl-D-erythritol 2-phosphate contacts are provided by residues 56 to 58, 61 to 65, 100 to 106, 132 to 135, Phe-139, and Arg-142; these read DIG, FPDTD, AQAPKMA, and TTEE.

This sequence belongs to the IspF family. As to quaternary structure, homotrimer. The cofactor is a divalent metal cation.

It catalyses the reaction 4-CDP-2-C-methyl-D-erythritol 2-phosphate = 2-C-methyl-D-erythritol 2,4-cyclic diphosphate + CMP. Its pathway is isoprenoid biosynthesis; isopentenyl diphosphate biosynthesis via DXP pathway; isopentenyl diphosphate from 1-deoxy-D-xylulose 5-phosphate: step 4/6. Functionally, involved in the biosynthesis of isopentenyl diphosphate (IPP) and dimethylallyl diphosphate (DMAPP), two major building blocks of isoprenoid compounds. Catalyzes the conversion of 4-diphosphocytidyl-2-C-methyl-D-erythritol 2-phosphate (CDP-ME2P) to 2-C-methyl-D-erythritol 2,4-cyclodiphosphate (ME-CPP) with a corresponding release of cytidine 5-monophosphate (CMP). The polypeptide is 2-C-methyl-D-erythritol 2,4-cyclodiphosphate synthase (Pseudomonas entomophila (strain L48)).